The primary structure comprises 203 residues: Glycerol-3-phosphate acyltransferase (203 aa).

5 helical membrane passes run 13-33 (TLACLVFGYLLGSIPFGLILT), 66-86 (TLLLDALKGTAAAAIASLWGV), 88-108 (AGMAAGLAAFLGHLFPVWLSF), 118-138 (IGVLLGLVPVMVLLFAAAWLA), and 156-176 (IIPVALYATGNGKVALLFAVM).

The protein belongs to the PlsY family. Probably interacts with PlsX.

It localises to the cell inner membrane. It catalyses the reaction an acyl phosphate + sn-glycerol 3-phosphate = a 1-acyl-sn-glycero-3-phosphate + phosphate. The protein operates within lipid metabolism; phospholipid metabolism. Functionally, catalyzes the transfer of an acyl group from acyl-phosphate (acyl-PO(4)) to glycerol-3-phosphate (G3P) to form lysophosphatidic acid (LPA). This enzyme utilizes acyl-phosphate as fatty acyl donor, but not acyl-CoA or acyl-ACP. The sequence is that of Glycerol-3-phosphate acyltransferase from Sinorhizobium medicae (strain WSM419) (Ensifer medicae).